The sequence spans 103 residues: Translation initiation factor 1A (103 aa).

The S1-like domain occupies T11–T86.

Belongs to the eIF-1A family.

In terms of biological role, seems to be required for maximal rate of protein biosynthesis. Enhances ribosome dissociation into subunits and stabilizes the binding of the initiator Met-tRNA(I) to 40 S ribosomal subunits. The chain is Translation initiation factor 1A (eIF1A) from Methanococcus maripaludis (strain C5 / ATCC BAA-1333).